The following is a 209-amino-acid chain: A-type ATP synthase subunit D (209 aa).

This sequence belongs to the V-ATPase D subunit family. In terms of assembly, has multiple subunits with at least A(3), B(3), C, D, E, F, H, I and proteolipid K(x).

It is found in the cell membrane. Functionally, component of the A-type ATP synthase that produces ATP from ADP in the presence of a proton gradient across the membrane. The chain is A-type ATP synthase subunit D from Archaeoglobus fulgidus (strain ATCC 49558 / DSM 4304 / JCM 9628 / NBRC 100126 / VC-16).